We begin with the raw amino-acid sequence, 242 residues long: 2-C-methyl-D-erythritol 4-phosphate cytidylyltransferase (242 aa).

Belongs to the IspD/TarI cytidylyltransferase family. IspD subfamily.

It carries out the reaction 2-C-methyl-D-erythritol 4-phosphate + CTP + H(+) = 4-CDP-2-C-methyl-D-erythritol + diphosphate. It functions in the pathway isoprenoid biosynthesis; isopentenyl diphosphate biosynthesis via DXP pathway; isopentenyl diphosphate from 1-deoxy-D-xylulose 5-phosphate: step 2/6. In terms of biological role, catalyzes the formation of 4-diphosphocytidyl-2-C-methyl-D-erythritol from CTP and 2-C-methyl-D-erythritol 4-phosphate (MEP). The chain is 2-C-methyl-D-erythritol 4-phosphate cytidylyltransferase from Halorhodospira halophila (strain DSM 244 / SL1) (Ectothiorhodospira halophila (strain DSM 244 / SL1)).